A 492-amino-acid chain; its full sequence is Amphoterin-induced protein 1 (492 aa).

The N-terminal stretch at 1–27 (MQPQRDLRGLWLLLLSVFLLLFEVARA) is a signal peptide. The region spanning 28 to 61 (GRSVVSCPANCLCASNILSCSKQQLPNVPQSLPS) is the LRRNT domain. The Extracellular portion of the chain corresponds to 28 to 371 (GRSVVSCPAN…LHGHHDTLNT (344 aa)). 2 cysteine pairs are disulfide-bonded: cysteine 34-cysteine 40 and cysteine 38-cysteine 47. 6 LRR repeats span residues 62 to 83 (YTAL…WTPT), 87 to 108 (NLHS…AFVP), 111 to 132 (NLRY…LFSD), 135 to 156 (ALEV…AFED), 159 to 180 (QLQK…LIKD), and 186 to 206 (KLML…TDLQ). N-linked (GlcNAc...) asparagine glycosylation occurs at asparagine 72. In terms of domain architecture, LRRCT spans 208 to 272 (LPAWVKNGLY…FSLDFFNCSE (65 aa)). Intrachain disulfides connect cysteine 225–cysteine 253, cysteine 227–cysteine 270, and cysteine 290–cysteine 340. Residues asparagine 269, asparagine 315, asparagine 348, and asparagine 359 are each glycosylated (N-linked (GlcNAc...) asparagine). The Ig-like C2-type domain occupies 269 to 352 (NCSEYKESAW…MGETFNETLS (84 aa)). Residues 372–392 (AYTTLVGCILSVVLVLIYLYL) form a helical membrane-spanning segment. Topologically, residues 393–492 (TPCRCWCRGV…SVFSDTPIVV (100 aa)) are cytoplasmic. The tract at residues 404-492 (KPSSHQGDSL…SVFSDTPIVV (89 aa)) is disordered. Positions 407 to 423 (SHQGDSLSSSMLSTTPN) are enriched in polar residues. Residues 430-441 (GDKDDGFDRRVA) show a composition bias toward basic and acidic residues. A phosphoserine mark is found at serine 476 and serine 480.

Belongs to the immunoglobulin superfamily. AMIGO family. In terms of assembly, homodimer, and heterodimer with AMIGO2 and AMIGO3. Interacts with KCNB1. Expressed in hippocampal and cortical neurons (at protein level). High levels in cerebellum, cerebrum, and retina. Low levels in liver, kidney, small intestine, spleen, lung and heart.

It is found in the cell membrane. Its subcellular location is the perikaryon. The protein localises to the cell projection. It localises to the dendrite. Promotes growth and fasciculation of neurites from cultured hippocampal neurons. May be involved in fasciculation as well as myelination of developing neural axons. May have a role in regeneration as well as neural plasticity in the adult nervous system. May mediate homophilic as well as heterophilic cell-cell interaction and contribute to signal transduction through its intracellular domain. Assembled with KCNB1 modulates the gating characteristics of the delayed rectifier voltage-dependent potassium channel KCNB1. The chain is Amphoterin-induced protein 1 from Mus musculus (Mouse).